We begin with the raw amino-acid sequence, 336 residues long: Eukaryotic translation initiation factor 3 subunit H (336 aa).

Positions 21–154 constitute an MPN domain; sequence VQCDGLAAMK…LKAYRLTPQA (134 aa).

The protein belongs to the eIF-3 subunit H family. As to quaternary structure, component of the eukaryotic translation initiation factor 3 (eIF-3) complex.

The protein resides in the cytoplasm. In terms of biological role, component of the eukaryotic translation initiation factor 3 (eIF-3) complex, which is involved in protein synthesis of a specialized repertoire of mRNAs and, together with other initiation factors, stimulates binding of mRNA and methionyl-tRNAi to the 40S ribosome. The eIF-3 complex specifically targets and initiates translation of a subset of mRNAs involved in cell proliferation. The sequence is that of Eukaryotic translation initiation factor 3 subunit H from Culex quinquefasciatus (Southern house mosquito).